Here is a 270-residue protein sequence, read N- to C-terminus: Checkpoint signal transducer rad24 (270 aa).

Residues Ser-34 and Ser-66 each carry the phosphoserine modification. A disordered region spans residues 242 to 270 (AAAGGNTEGAQENAPSNAPEGEAEPKADA).

This sequence belongs to the 14-3-3 family. Homodimer. Binds preferentially to mei2 phosphorylated by ran1/pat1. Binds preferentially to cdc25 phosphorylated by srk1 during G2; the interaction is increased during osmotic stress. Interacts with byr2. Interacts with rad25.

It is found in the cytoplasm. In terms of biological role, acts in cell cycle and stress checkpoint signaling by sequestering signal transducers regulated by the checkpoints. Required for the DNA damage checkpoint that ensures that DNA damage is repaired before mitosis is attempted. During environmental stress, sequesters srk1-phosphorylated cdc25 in the cytoplasm to delay the G2/M transition. Sequesters byr2 in the cytoplasm to prevent its translocation to the plasma membrane. Sequesters ran1/pat1-phosphorylated mei2 from its non-coding RNA activators (including meiRNA), to prevent meiotic induction in vegetative cells and to regulate meiosis I. This chain is Checkpoint signal transducer rad24, found in Schizosaccharomyces pombe (strain 972 / ATCC 24843) (Fission yeast).